Here is a 155-residue protein sequence, read N- to C-terminus: MRLRLIAVGSRMPKWVEEGWHEYAKRMPSELALELVEIPLNTRGKNADVARFIRQEGEAMLAKVQPGERIVTLEVHGKPWSTEQLAVELDRWRLDARTVNLMVGGPEGLAPEVCARSEQRWSLSPLTLPHPLVRILIGEQMYRAWTVLSGHPYHK.

S-adenosyl-L-methionine is bound by residues leucine 73, glycine 104, and 123 to 128 (LSPLTL).

Belongs to the RNA methyltransferase RlmH family. In terms of assembly, homodimer.

Its subcellular location is the cytoplasm. The catalysed reaction is pseudouridine(1915) in 23S rRNA + S-adenosyl-L-methionine = N(3)-methylpseudouridine(1915) in 23S rRNA + S-adenosyl-L-homocysteine + H(+). Specifically methylates the pseudouridine at position 1915 (m3Psi1915) in 23S rRNA. The sequence is that of Ribosomal RNA large subunit methyltransferase H from Pseudomonas savastanoi pv. phaseolicola (strain 1448A / Race 6) (Pseudomonas syringae pv. phaseolicola (strain 1448A / Race 6)).